Here is a 41-residue protein sequence, read N- to C-terminus: Large ribosomal subunit protein bL36B (41 aa).

It belongs to the bacterial ribosomal protein bL36 family.

This chain is Large ribosomal subunit protein bL36B, found in Vibrio campbellii (strain ATCC BAA-1116).